The primary structure comprises 653 residues: DNA mismatch repair protein MutL (653 aa).

Residues 368 to 413 form a disordered region; it reads EVSQVAEPEGKTDITNKKETETKEKAEKKENKQEEKEEKTSAPEYV. Basic and acidic residues predominate over residues 375 to 408; the sequence is PEGKTDITNKKETETKEKAEKKENKQEEKEEKTS.

It belongs to the DNA mismatch repair MutL/HexB family.

In terms of biological role, this protein is involved in the repair of mismatches in DNA. It is required for dam-dependent methyl-directed DNA mismatch repair. May act as a 'molecular matchmaker', a protein that promotes the formation of a stable complex between two or more DNA-binding proteins in an ATP-dependent manner without itself being part of a final effector complex. The sequence is that of DNA mismatch repair protein MutL from Lactobacillus delbrueckii subsp. bulgaricus (strain ATCC 11842 / DSM 20081 / BCRC 10696 / JCM 1002 / NBRC 13953 / NCIMB 11778 / NCTC 12712 / WDCM 00102 / Lb 14).